We begin with the raw amino-acid sequence, 630 residues long: 1-deoxy-D-xylulose-5-phosphate synthase (630 aa).

Thiamine diphosphate-binding positions include His73 and 114–116; that span reads SHA. Asp146 lines the Mg(2+) pocket. Residues 147 to 148, Asn176, Phe287, and Glu371 contribute to the thiamine diphosphate site; that span reads GA. Asn176 provides a ligand contact to Mg(2+).

It belongs to the transketolase family. DXPS subfamily. In terms of assembly, homodimer. Requires Mg(2+) as cofactor. The cofactor is thiamine diphosphate.

It catalyses the reaction D-glyceraldehyde 3-phosphate + pyruvate + H(+) = 1-deoxy-D-xylulose 5-phosphate + CO2. It participates in metabolic intermediate biosynthesis; 1-deoxy-D-xylulose 5-phosphate biosynthesis; 1-deoxy-D-xylulose 5-phosphate from D-glyceraldehyde 3-phosphate and pyruvate: step 1/1. Catalyzes the acyloin condensation reaction between C atoms 2 and 3 of pyruvate and glyceraldehyde 3-phosphate to yield 1-deoxy-D-xylulose-5-phosphate (DXP). The chain is 1-deoxy-D-xylulose-5-phosphate synthase from Corynebacterium jeikeium (strain K411).